A 482-amino-acid chain; its full sequence is tRNA sulfurtransferase (482 aa).

One can recognise a THUMP domain in the interval 61-165 (LAIRDALTRI…DDRLLLIKGR (105 aa)). Residues 183 to 184 (LI), Lys-265, Gly-287, and Gln-296 contribute to the ATP site. Cys-344 and Cys-456 are joined by a disulfide. A Rhodanese domain is found at 404–482 (FGPNDVILDI…GFNNVKVYRP (79 aa)). Residue Cys-456 is the Cysteine persulfide intermediate of the active site.

Belongs to the ThiI family.

It localises to the cytoplasm. It catalyses the reaction [ThiI sulfur-carrier protein]-S-sulfanyl-L-cysteine + a uridine in tRNA + 2 reduced [2Fe-2S]-[ferredoxin] + ATP + H(+) = [ThiI sulfur-carrier protein]-L-cysteine + a 4-thiouridine in tRNA + 2 oxidized [2Fe-2S]-[ferredoxin] + AMP + diphosphate. The catalysed reaction is [ThiS sulfur-carrier protein]-C-terminal Gly-Gly-AMP + S-sulfanyl-L-cysteinyl-[cysteine desulfurase] + AH2 = [ThiS sulfur-carrier protein]-C-terminal-Gly-aminoethanethioate + L-cysteinyl-[cysteine desulfurase] + A + AMP + 2 H(+). Its pathway is cofactor biosynthesis; thiamine diphosphate biosynthesis. Its function is as follows. Catalyzes the ATP-dependent transfer of a sulfur to tRNA to produce 4-thiouridine in position 8 of tRNAs, which functions as a near-UV photosensor. Also catalyzes the transfer of sulfur to the sulfur carrier protein ThiS, forming ThiS-thiocarboxylate. This is a step in the synthesis of thiazole, in the thiamine biosynthesis pathway. The sulfur is donated as persulfide by IscS. This chain is tRNA sulfurtransferase, found in Escherichia coli (strain K12 / MC4100 / BW2952).